The following is a 102-amino-acid chain: MSETTISKEEVAHVAKLAKLSFDDSELTQFTTQLGDILNIFNTLGEVDTAAVEPTYSVTENVNHLRDDVAHNWHQKQGLLENAPLASAGLIKVPAILEDEGE.

This sequence belongs to the GatC family. Heterotrimer of A, B and C subunits.

It carries out the reaction L-glutamyl-tRNA(Gln) + L-glutamine + ATP + H2O = L-glutaminyl-tRNA(Gln) + L-glutamate + ADP + phosphate + H(+). It catalyses the reaction L-aspartyl-tRNA(Asn) + L-glutamine + ATP + H2O = L-asparaginyl-tRNA(Asn) + L-glutamate + ADP + phosphate + 2 H(+). Functionally, allows the formation of correctly charged Asn-tRNA(Asn) or Gln-tRNA(Gln) through the transamidation of misacylated Asp-tRNA(Asn) or Glu-tRNA(Gln) in organisms which lack either or both of asparaginyl-tRNA or glutaminyl-tRNA synthetases. The reaction takes place in the presence of glutamine and ATP through an activated phospho-Asp-tRNA(Asn) or phospho-Glu-tRNA(Gln). The polypeptide is Aspartyl/glutamyl-tRNA(Asn/Gln) amidotransferase subunit C (Leuconostoc citreum (strain KM20)).